The primary structure comprises 382 residues: Anhydro-N-acetylmuramic acid kinase (382 aa).

Gly9–Asp16 provides a ligand contact to ATP.

This sequence belongs to the anhydro-N-acetylmuramic acid kinase family.

It catalyses the reaction 1,6-anhydro-N-acetyl-beta-muramate + ATP + H2O = N-acetyl-D-muramate 6-phosphate + ADP + H(+). It functions in the pathway amino-sugar metabolism; 1,6-anhydro-N-acetylmuramate degradation. Its pathway is cell wall biogenesis; peptidoglycan recycling. Its function is as follows. Catalyzes the specific phosphorylation of 1,6-anhydro-N-acetylmuramic acid (anhMurNAc) with the simultaneous cleavage of the 1,6-anhydro ring, generating MurNAc-6-P. Is required for the utilization of anhMurNAc either imported from the medium or derived from its own cell wall murein, and thus plays a role in cell wall recycling. The polypeptide is Anhydro-N-acetylmuramic acid kinase (Bacillus cereus (strain AH187)).